The primary structure comprises 662 residues: Probable lysophospholipase 3 (662 aa).

The signal sequence occupies residues 1-19 (MLFNCFGILALLQILPALA). 18 N-linked (GlcNAc...) asparagine glycosylation sites follow: Asn-74, Asn-127, Asn-162, Asn-196, Asn-266, Asn-274, Asn-303, Asn-376, Asn-406, Asn-411, Asn-483, Asn-518, Asn-523, Asn-547, Asn-556, Asn-574, Asn-596, and Asn-613. In terms of domain architecture, PLA2c spans 76–617 (TCPSDYMLRP…EQYCWNGTTV (542 aa)).

It belongs to the lysophospholipase family.

The protein resides in the secreted. It catalyses the reaction a 1-acyl-sn-glycero-3-phosphocholine + H2O = sn-glycerol 3-phosphocholine + a fatty acid + H(+). Its function is as follows. Catalyzes the release of fatty acids from lysophospholipids. This Schizosaccharomyces pombe (strain 972 / ATCC 24843) (Fission yeast) protein is Probable lysophospholipase 3 (plb3).